Here is a 170-residue protein sequence, read N- to C-terminus: Adenine phosphoribosyltransferase (170 aa).

It belongs to the purine/pyrimidine phosphoribosyltransferase family. Homodimer.

The protein localises to the cytoplasm. The catalysed reaction is AMP + diphosphate = 5-phospho-alpha-D-ribose 1-diphosphate + adenine. The protein operates within purine metabolism; AMP biosynthesis via salvage pathway; AMP from adenine: step 1/1. Functionally, catalyzes a salvage reaction resulting in the formation of AMP, that is energically less costly than de novo synthesis. This chain is Adenine phosphoribosyltransferase, found in Mycoplasmopsis pulmonis (strain UAB CTIP) (Mycoplasma pulmonis).